The following is a 604-amino-acid chain: Lipoprotein LpqB (604 aa).

The signal sequence occupies residues 1–27 (MTMRAARLSGSTGLTAALVAVLLVLTG). C28 carries N-palmitoyl cysteine lipidation. A lipid anchor (S-diacylglycerol cysteine) is attached at C28. The disordered stretch occupies residues 35-60 (SAPQALGTIDREPTSEGPTPPIAGRD).

The protein belongs to the LpqB lipoprotein family.

Its subcellular location is the cell membrane. The protein is Lipoprotein LpqB of Nocardia farcinica (strain IFM 10152).